The following is a 658-amino-acid chain: DNA mismatch repair protein MutL (658 aa).

Positions 114-130 (RQEDSSHATQVKAEDGK) are enriched in basic and acidic residues. Disordered regions lie at residues 114-138 (RQEDSSHATQVKAEDGKLSSPTAAA) and 353-405 (PMPS…HSLS). The segment covering 361-372 (ENLFDSASNHPT) has biased composition (polar residues).

The protein belongs to the DNA mismatch repair MutL/HexB family.

In terms of biological role, this protein is involved in the repair of mismatches in DNA. It is required for dam-dependent methyl-directed DNA mismatch repair. May act as a 'molecular matchmaker', a protein that promotes the formation of a stable complex between two or more DNA-binding proteins in an ATP-dependent manner without itself being part of a final effector complex. The protein is DNA mismatch repair protein MutL of Neisseria gonorrhoeae (strain NCCP11945).